Here is a 166-residue protein sequence, read N- to C-terminus: Large ribosomal subunit protein uL10 (166 aa).

Belongs to the universal ribosomal protein uL10 family. As to quaternary structure, part of the ribosomal stalk of the 50S ribosomal subunit. The N-terminus interacts with L11 and the large rRNA to form the base of the stalk. The C-terminus forms an elongated spine to which L12 dimers bind in a sequential fashion forming a multimeric L10(L12)X complex.

In terms of biological role, forms part of the ribosomal stalk, playing a central role in the interaction of the ribosome with GTP-bound translation factors. This is Large ribosomal subunit protein uL10 from Staphylococcus epidermidis (strain ATCC 35984 / DSM 28319 / BCRC 17069 / CCUG 31568 / BM 3577 / RP62A).